A 175-amino-acid polypeptide reads, in one-letter code: Alpha-crystallin B chain (175 aa).

At Met-1 the chain carries N-acetylmethionine. Residue Ser-19 is modified to Phosphoserine. An O-linked (GlcNAc) serine glycan is attached at Ser-41. 2 positions are modified to phosphoserine: Ser-45 and Ser-59. The sHSP domain occupies 56-164 (RAPSWIDTGL…PERTIPITRE (109 aa)). His-83 contributes to the Zn(2+) binding site. Position 92 is an N6-acetyllysine (Lys-92). Residues His-104, Glu-106, His-111, and His-119 each coordinate Zn(2+). A disordered region spans residues 142–175 (VLTVNGPRRQASGPERTIPITREEKPAVTAAPKK). N6-acetyllysine is present on Lys-166. Thr-170 carries an O-linked (GlcNAc) threonine glycan.

It belongs to the small heat shock protein (HSP20) family. As to quaternary structure, heteromer composed of three CRYAA and one CRYAB subunits. Aggregates with homologous proteins, including the small heat shock protein HSPB1, to form large heteromeric complexes. Inter-subunit bridging via zinc ions enhances stability, which is crucial as there is no protein turn over in the lens. Interacts with HSPBAP1 and TTN/titin. Interacts with TMEM109; in the cellular response to DNA damage. Interacts with DES; binds rapidly during early stages of DES filament assembly and a reduced binding seen in the later stages. Interacts with TMED10; the interaction mediates the translocation from the cytoplasm into the ERGIC (endoplasmic reticulum-Golgi intermediate compartment) and thereby secretion. Interacts with ATP6V1A and with MTOR, forming a ternary complex.

The protein resides in the cytoplasm. The protein localises to the nucleus. It localises to the secreted. Its subcellular location is the lysosome. Functionally, may contribute to the transparency and refractive index of the lens. Has chaperone-like activity, preventing aggregation of various proteins under a wide range of stress conditions. In lens epithelial cells, stabilizes the ATP6V1A protein, preventing its degradation by the proteasome. This Sus scrofa (Pig) protein is Alpha-crystallin B chain (CRYAB).